A 103-amino-acid polypeptide reads, in one-letter code: MAAVSLSVSTVKPLGDRVFVKVSASEEKTAGGLYLPDTAKEKPQVGEVVALGAGKRNDDGSRQELEVKVGDKVLYSKYAGTDVKLGTEEYVLLSEKDILAVVG.

It belongs to the GroES chaperonin family. As to quaternary structure, heptamer of 7 subunits arranged in a ring. Interacts with the chaperonin GroEL.

It localises to the cytoplasm. Its function is as follows. Together with the chaperonin GroEL, plays an essential role in assisting protein folding. The GroEL-GroES system forms a nano-cage that allows encapsulation of the non-native substrate proteins and provides a physical environment optimized to promote and accelerate protein folding. GroES binds to the apical surface of the GroEL ring, thereby capping the opening of the GroEL channel. In Nostoc sp. (strain PCC 7120 / SAG 25.82 / UTEX 2576), this protein is Co-chaperonin GroES.